A 157-amino-acid chain; its full sequence is Protein AE7 (157 aa).

It belongs to the MIP18 family. As to quaternary structure, part of a complex formed of AE7, CIA1, MMS19 and NAR1. Interacts with CIA1 and MMS19, but not with NAR1. Expressed in the embryo, shoot apical meristem, leaf primordia, inflorescence and all floral organs.

The protein localises to the nucleus. It localises to the cytoplasm. Functionally, central member of the cytosolic iron-sulfur (Fe-S) protein assembly (CIA) pathway. Involved in leaf polarity formation. Promotes leaf adaxial identity. May play a role in the cell cycle progression and is required for cell proliferation. In Arabidopsis thaliana (Mouse-ear cress), this protein is Protein AE7.